The primary structure comprises 519 residues: MVAIIPHASFTTIKLTQKTEGSQMPTEEICKINMRTRKFDVGGNSRDFECFYSNFVQTVILLGTFFYCVERLQPWSIVTADISYKQIFVNVFVVCLIMVGLIFTKYWQHGYKSLPKFDTIYSLYLPFMVSLLFDTSSTVINTILILSVLNSYRWRTQLVVIILQLCLIFFNFEAGDRLKNIISIVINSLLSLILKYIGQLKSLDNIDSNLFSILLTNILYVSEAGTVHFRILKGIILALTTIISINYVLKKVMHFKPFMLSISFAIGLPLFANTFIHLEDGENPLLWLVKYILESTIRQKILFAWSSILILSIPSILIEKDSLSLNTSRKLWHFIIFLLIIPSFQMDSNFVKIALSGTIPVFLSIEYIRFQNLPPLGSAIELQLRRFADDRDHSGPLIISYLYLLFGISTPLLMNNSPMGLIGLGIGDSLASIIGKRYGRIRWKGTQKTLEGTLAFIVTSFIVCLVLLRFDKAAIFNHLTTLQLLTLCTLSGVLEGNSVLNDNILIPAFMMICEKLITL.

At 1-47 the chain is on the cytoplasmic side; sequence MVAIIPHASFTTIKLTQKTEGSQMPTEEICKINMRTRKFDVGGNSRD. Residues 48-68 form a helical membrane-spanning segment; that stretch reads FECFYSNFVQTVILLGTFFYC. Topologically, residues 69–88 are lumenal; that stretch reads VERLQPWSIVTADISYKQIF. The helical transmembrane segment at 89–109 threads the bilayer; it reads VNVFVVCLIMVGLIFTKYWQH. Topologically, residues 110–118 are cytoplasmic; the sequence is GYKSLPKFD. The helical transmembrane segment at 119–139 threads the bilayer; the sequence is TIYSLYLPFMVSLLFDTSSTV. Topologically, residues 140–151 are lumenal; that stretch reads INTILILSVLNS. A helical transmembrane segment spans residues 152–172; that stretch reads YRWRTQLVVIILQLCLIFFNF. At 173-181 the chain is on the cytoplasmic side; it reads EAGDRLKNI. Residues 182–203 traverse the membrane as a helical segment; the sequence is ISIVINSLLSLILKYIGQLKSL. Residues 204–223 lie on the Lumenal side of the membrane; sequence DNIDSNLFSILLTNILYVSE. Residues 224–244 traverse the membrane as a helical segment; it reads AGTVHFRILKGIILALTTIIS. The Cytoplasmic portion of the chain corresponds to 245–253; it reads INYVLKKVM. A helical transmembrane segment spans residues 254–274; the sequence is HFKPFMLSISFAIGLPLFANT. Residues 275–294 lie on the Lumenal side of the membrane; that stretch reads FIHLEDGENPLLWLVKYILE. Residues 295–315 form a helical membrane-spanning segment; the sequence is STIRQKILFAWSSILILSIPS. Residues 316–326 lie on the Cytoplasmic side of the membrane; that stretch reads ILIEKDSLSLN. The chain crosses the membrane as a helical span at residues 327 to 347; that stretch reads TSRKLWHFIIFLLIIPSFQMD. The Lumenal portion of the chain corresponds to 348-349; the sequence is SN. A helical transmembrane segment spans residues 350–370; it reads FVKIALSGTIPVFLSIEYIRF. The Cytoplasmic segment spans residues 371 to 394; the sequence is QNLPPLGSAIELQLRRFADDRDHS. A helical membrane pass occupies residues 395–415; sequence GPLIISYLYLLFGISTPLLMN. The Lumenal portion of the chain corresponds to 416–417; that stretch reads NS. A helical membrane pass occupies residues 418–438; it reads PMGLIGLGIGDSLASIIGKRY. Topologically, residues 439-449 are cytoplasmic; that stretch reads GRIRWKGTQKT. A helical transmembrane segment spans residues 450-470; that stretch reads LEGTLAFIVTSFIVCLVLLRF. At 471–472 the chain is on the lumenal side; the sequence is DK. A helical membrane pass occupies residues 473–493; it reads AAIFNHLTTLQLLTLCTLSGV. At 494–519 the chain is on the cytoplasmic side; that stretch reads LEGNSVLNDNILIPAFMMICEKLITL.

It belongs to the polyprenol kinase family.

The protein resides in the endoplasmic reticulum membrane. The enzyme catalyses a di-trans,poly-cis-dolichol + CTP = a di-trans,poly-cis-dolichyl phosphate + CDP + H(+). It participates in protein modification; protein glycosylation. Its function is as follows. Catalyzes CTP-mediated phosphorylation of dolichol, the terminal step in de novo dolichyl monophosphate (Dol-P) biosynthesis. Dol-P is a lipid carrier essential for the synthesis of N-linked and O-linked oligosaccharides and for GPI anchors. The polypeptide is Dolichol kinase (SEC59) (Saccharomyces cerevisiae (strain ATCC 204508 / S288c) (Baker's yeast)).